A 523-amino-acid chain; its full sequence is Cytochrome P450 monooxygenase ple1 (523 aa).

Residues 9 to 29 (ALPVLAIWAAIGLAYWIDSQK) form a helical membrane-spanning segment. Asn-141 is a glycosylation site (N-linked (GlcNAc...) asparagine). A heme-binding site is contributed by Cys-444.

It belongs to the cytochrome P450 family. Heme is required as a cofactor.

Its subcellular location is the membrane. The protein operates within secondary metabolite biosynthesis; terpenoid biosynthesis. Its function is as follows. Cytochrome P450 monooxygenase; part of the gene cluster that mediates the biosynthesis of pleuromutilin, a tricyclic diterpene showing antibacterial properties. The geranylgeranyl diphosphate (GGPP) synthase ple4 catalyzes the first step in pleuromutilin biosynthesis. GGPP is then substrate of the premutilin synthase (PS) ple3 to yield premutilin. Premutilin synthase is a bifunctional enzyme composed of the fusion of a class II diterpene cyclase (DTC) and a class I diterpene synthase (DTS), with the corresponding domains and active sites containing characteristic aspartate-rich motifs. GGPP is first converted to mutildienyl-diphosphate (MPP) at the class II DTC site. MPP is subsequently further cyclized at the class I DTS site, followed by a 1,5-hydride shift and addition of water prior to terminating deprotonation, to yield premutilin. The cytochrome P450 monooxygenases ple5 and ple6 hydroxylate premutilin at C-11 and C-3, respectively, producing 11-hydroxypremutilin and 3-hydroxypremutilin. The combination of the actions of both ple5 and ple6 leads to the production of 3,11-dihydroxypremutilin. The short chain dehydrogenase ple7 further converts 3,11-dihydroxypremutilin into mutilin. The acetyltransferase ple2 then acetylates mutilin to produce 14-O-acetylmutilin. Finally, the cytochrome P450 monooxygenase ple1 catalyzes hydroxylation on the alpha position of the acetyl side chain of 14-O-acetylmutilin to yield pleuromutilin. This is Cytochrome P450 monooxygenase ple1 from Rhodocybe pseudopiperita (Clitopilus pseudopiperitus).